Consider the following 404-residue polypeptide: G1/S-specific cyclin-E2 (404 aa).

The interval 1-41 is disordered; sequence MSRRSSRLQAKQHAQPNQPDSPQETQIIQAKKRKTAQDVKK. The segment covering 7–28 has biased composition (polar residues); that stretch reads RLQAKQHAQPNQPDSPQETQII. A Phosphoserine modification is found at S21. K348 is modified (N6-lactoyllysine). S383 bears the Phosphoserine mark. At T392 the chain carries Phosphothreonine.

Belongs to the cyclin family. Cyclin E subfamily. In terms of assembly, interacts with the CDK2 (in vivo) and CDK3 (in vitro) protein kinases to form a serine/threonine kinase holoenzyme complex. The cyclin subunit imparts substrate specificity to the complex. Phosphorylation by CDK2 triggers its release from CDK2 and degradation via the ubiquitin proteasome pathway. Post-translationally, lactylated at Lys-348. Delactylated by SIRT3. Highest levels in adult testis, thymus and brain. Lower levels in placenta, spleen and colon.

It is found in the nucleus. Functionally, essential for the control of the cell cycle at the late G1 and early S phase. This Mus musculus (Mouse) protein is G1/S-specific cyclin-E2 (Ccne2).